A 619-amino-acid polypeptide reads, in one-letter code: Guanylate cyclase soluble subunit beta-1 (619 aa).

Histidine 105 is a binding site for heme. Residues 421 to 554 (TILFSGIVGF…NTVNLTSRTE (134 aa)) form the Guanylate cyclase domain.

Belongs to the adenylyl cyclase class-4/guanylyl cyclase family. In terms of assembly, the active enzyme is formed by a heterodimer of an alpha and a beta subunit. Heterodimer with GUCY1A1. Can also form inactive homodimers in vitro. Heme is required as a cofactor. Detected in brain cortex and cerebellum (at protein level).

The protein localises to the cytoplasm. It catalyses the reaction GTP = 3',5'-cyclic GMP + diphosphate. Its activity is regulated as follows. Activated by nitric oxide in the presence of magnesium or manganese ions. Its function is as follows. Mediates responses to nitric oxide (NO) by catalyzing the biosynthesis of the signaling molecule cGMP. The polypeptide is Guanylate cyclase soluble subunit beta-1 (Homo sapiens (Human)).